A 2496-amino-acid polypeptide reads, in one-letter code: Non-reducing polyketide synthase adrD (2496 aa).

The interval 15–254 (LVFGPQIAEI…HHASHITAVQ (240 aa)) is N-terminal acylcarrier protein transacylase domain (SAT). A Ketosynthase family 3 (KS3) domain is found at 387-808 (ATPIAITGMG…GSNAALVVKQ (422 aa)). Residues Cys-552, His-687, and His-726 each act as for beta-ketoacyl synthase activity in the active site. Positions 914–1223 (LCFGGQNGNE…QSLDLGGPQG (310 aa)) are malonyl-CoA:ACP transacylase (MAT) domain. Ser-1001 (for acyl/malonyl transferase activity) is an active-site residue. The N-terminal hotdog fold stretch occupies residues 1295–1423 (KEFVQLLTKQ…GEISLHPFGQ (129 aa)). Residues 1295–1602 (KEFVQLLTKQ…FTSVSIAGLA (308 aa)) form the PKS/mFAS DH domain. The tract at residues 1296 to 1601 (EFVQLLTKQP…EFTSVSIAGL (306 aa)) is product template (PT) domain. His-1326 serves as the catalytic Proton acceptor; for dehydratase activity. Residues 1451 to 1602 (ESSGLKGFAV…FTSVSIAGLA (152 aa)) form a C-terminal hotdog fold region. Asp-1509 acts as the Proton donor; for dehydratase activity in catalysis. The segment covering 1615–1629 (EKASPDLSLRNDSKV) has biased composition (basic and acidic residues). The interval 1615–1645 (EKASPDLSLRNDSKVDVNPTPQNTAPVVQPT) is disordered. Positions 1633–1645 (PTPQNTAPVVQPT) are enriched in polar residues. Residues 1652–1726 (PGYFVVVQEM…ALVQTIFPDA (75 aa)) form the Carrier domain. Ser-1686 bears the O-(pantetheine 4'-phosphoryl)serine mark. A methyltransferase (CMeT) domain region spans residues 1888–2121 (QHRSEHHLLK…GFQWVDWTHN (234 aa)). The segment at 2151 to 2496 (RVMNEETVPY…YEFLRDHVRY (346 aa)) is thioesterase (TE) domain. Residues Ser-2274 and Asp-2433 each act as for thioesterase activity in the active site.

The catalysed reaction is 3 malonyl-CoA + acetyl-CoA + 2 S-adenosyl-L-methionine = 3,5-dimethylorsellinate + 2 S-adenosyl-L-homocysteine + 3 CO2 + 4 CoA. The protein operates within secondary metabolite biosynthesis; terpenoid biosynthesis. Functionally, non-reducing polyketide synthase; part of the gene cluster that mediates the biosynthesis of andrastins, meroterpenoid compounds that exhibit inhibitory activity against ras farnesyltransferase, suggesting that they could be promising leads for antitumor agents. The first step of the pathway is the synthesis of 3,5-dimethylorsellinic acid (DMOA) by the polyketide synthase adrD via condensation of one acetyl-CoA starter unit with 3 malonyl-CoA units and 2 methylations. DMAO is then converted to farnesyl-DMAO by the prenyltransferase adrG. The methyltransferase adrK catalyzes the methylation of the carboxyl group of farnesyl-DMAO to farnesyl-DMAO methyl ester which is further converted to epoxyfarnesyl-DMAO methyl ester by the FAD-dependent monooxygenase adrH. The terpene cyclase adrI then catalyzes the carbon skeletal rearrangement to generate the andrastin E, the first compound in the pathway having the andrastin scaffold, with the tetracyclic ring system. The post-cyclization tailoring enzymes adrF, adrE, adrJ, and adrA, are involved in the conversion of andrastin E into andrastin A. The short chain dehydrogenase adrF is responsible for the oxidation of the C-3 a hydroxyl group of andrastin E to yield the corresponding ketone, andrastin D. The ketoreductase adrE stereoselectively reduces the carbonyl moiety to reverse the stereochemistry of the C-3 position to yield andrastin F. The acetyltransferase adrJ is the acetyltransferase that attaches the acetyl group to the C-3 hydroxyl group of andrastin F to yield andrastin C. Finally, the cytochrome P450 monooxygenase adrA catalyzes two sequential oxidation reactions of the C-23 methyl group, to generate the corresponding alcohol andrastin B, and aldehyde andrastin A. The polypeptide is Non-reducing polyketide synthase adrD (Penicillium rubens (strain ATCC 28089 / DSM 1075 / NRRL 1951 / Wisconsin 54-1255) (Penicillium chrysogenum)).